We begin with the raw amino-acid sequence, 515 residues long: Aldehyde dehydrogenase tropH (515 aa).

Gly238–Gly243 provides a ligand contact to NAD(+). Glu260 acts as the Proton acceptor in catalysis. The Nucleophile role is filled by Cys295.

It belongs to the aldehyde dehydrogenase family.

The enzyme catalyses an aldehyde + NAD(+) + H2O = a carboxylate + NADH + 2 H(+). It participates in secondary metabolite biosynthesis. Functionally, aldehyde dehydrogenase; part of the gene cluster that mediates the biosynthesis of the tropolone class of fungal maleic anhydrides. The pathway begins with the synthesis of 3-methylorcinaldehyde by the non-reducing polyketide synthase (PKS) tropA. 3-methylorcinaldehyde is the substrate for the FAD-dependent monooxygenase tropB to yield a dearomatized hydroxycyclohexadione. The 2-oxoglutarate-dependent dioxygenase tropC then performs the oxidative ring expansion to provide the first tropolone metabolite stipitaldehyde. Trop D converts stipitaldehyde into stipitacetal which is in turn converted to stipitalide by the short-chain dehydrogenase/reductase tropE. The next steps involve tropF, tropG, tropH, tropI and tropJ to form successive tropolone maleic anhydrides including stipitaldehydic, stipitatonic and stipitatic acids. The polypeptide is Aldehyde dehydrogenase tropH (Talaromyces stipitatus (strain ATCC 10500 / CBS 375.48 / QM 6759 / NRRL 1006) (Penicillium stipitatum)).